A 1123-amino-acid chain; its full sequence is Leucine--tRNA ligase, cytoplasmic (1123 aa).

The short motif at 84–94 is the 'HIGH' region element; the sequence is PYMNGRLHAGH. The 'KMSKS' region motif lies at 757–761; it reads KMSKS. Lys760 is a binding site for ATP.

Belongs to the class-I aminoacyl-tRNA synthetase family.

It localises to the cytoplasm. It carries out the reaction tRNA(Leu) + L-leucine + ATP = L-leucyl-tRNA(Leu) + AMP + diphosphate. The sequence is that of Leucine--tRNA ligase, cytoplasmic (leu-6) from Neurospora crassa (strain ATCC 24698 / 74-OR23-1A / CBS 708.71 / DSM 1257 / FGSC 987).